The sequence spans 369 residues: Phosphate acyltransferase (369 aa).

Residues 342–369 are disordered; the sequence is ASRAPNSQTAGGERAAAVPQSAQLRMDS.

This sequence belongs to the PlsX family. Homodimer. Probably interacts with PlsY.

Its subcellular location is the cytoplasm. It catalyses the reaction a fatty acyl-[ACP] + phosphate = an acyl phosphate + holo-[ACP]. It participates in lipid metabolism; phospholipid metabolism. Catalyzes the reversible formation of acyl-phosphate (acyl-PO(4)) from acyl-[acyl-carrier-protein] (acyl-ACP). This enzyme utilizes acyl-ACP as fatty acyl donor, but not acyl-CoA. The polypeptide is Phosphate acyltransferase (Methylocella silvestris (strain DSM 15510 / CIP 108128 / LMG 27833 / NCIMB 13906 / BL2)).